The sequence spans 100 residues: NADH-quinone oxidoreductase subunit K (100 aa).

A run of 3 helical transmembrane segments spans residues 4-24, 29-49, and 60-80; these read LSHA…AIIV, LFIL…FVIV, and IMYI…LALL.

Belongs to the complex I subunit 4L family. In terms of assembly, NDH-1 is composed of 13 different subunits. Subunits NuoA, H, J, K, L, M, N constitute the membrane sector of the complex.

Its subcellular location is the cell inner membrane. It carries out the reaction a quinone + NADH + 5 H(+)(in) = a quinol + NAD(+) + 4 H(+)(out). Its function is as follows. NDH-1 shuttles electrons from NADH, via FMN and iron-sulfur (Fe-S) centers, to quinones in the respiratory chain. The immediate electron acceptor for the enzyme in this species is believed to be ubiquinone. Couples the redox reaction to proton translocation (for every two electrons transferred, four hydrogen ions are translocated across the cytoplasmic membrane), and thus conserves the redox energy in a proton gradient. In Blochmanniella pennsylvanica (strain BPEN), this protein is NADH-quinone oxidoreductase subunit K.